A 320-amino-acid polypeptide reads, in one-letter code: MKKIMITGALGQIGTELVVKCRTLYGNDNVLATDIREPEEGSALKNGPFEILDVTDKARMDELVESFKPDTMMHMAALLSATAEKNPLFAWDLNMGGLMNALEVAREYKLQFFTPSSIGAFGPSTPKVNTPQVTIQRPTSMYGVNKVAGELLCQYYFEKFGVDTRSVRFPGLISHIKEPGGGTTDYAVDIYFKAVREGQYSSFIAKDTFMDMMFMEDAINAIIQLMEADGVKLINRNAYNLSAMSIEPEMVKEAIQEYYPDFKLDYDVDPVRQSIADSWPNSIDVSCARAEWGFDPQYDLSAMTKVMLDAIEGKEKAEVK.

The protein belongs to the NAD(P)-dependent epimerase/dehydratase family.

This is an uncharacterized protein from Staphylococcus saprophyticus subsp. saprophyticus (strain ATCC 15305 / DSM 20229 / NCIMB 8711 / NCTC 7292 / S-41).